The chain runs to 378 residues: T-cell immunoglobulin and mucin domain-containing protein 4 (378 aa).

Positions 1-24 (MSKEPLILWLMIEFWWLYLTPVTS) are cleaved as a signal peptide. One can recognise an Ig-like V-type domain in the interval 25-126 (ETVVTEVLGH…PGWFNDVKIN (102 aa)). The Extracellular portion of the chain corresponds to 25 to 314 (ETVVTEVLGH…SMKNEMPISQ (290 aa)). Cystine bridges form between cysteine 40–cysteine 112, cysteine 53–cysteine 64, and cysteine 59–cysteine 111. Disordered regions lie at residues 136–160 (TTTHRTATTTTRRTTTTSPTTTRQM) and 269–304 (WKTSDSVSSPQPGASDTAVPEQNKTTKTGQMDGIPM). The segment covering 269–297 (WKTSDSVSSPQPGASDTAVPEQNKTTKTG) has biased composition (polar residues). An N-linked (GlcNAc...) asparagine glycan is attached at asparagine 291. A helical transmembrane segment spans residues 315–335 (LLMIIAPSLGFVLFALFVAFL). The Cytoplasmic segment spans residues 336-378 (LRGKLMETYCSQKHTRLDYIGDSKNVLNDVQHGREDEDGLFTL). Serine 358 is modified (phosphoserine).

This sequence belongs to the immunoglobulin superfamily. TIM family. As to quaternary structure, interacts with MERTK; this interaction enhances TIMD4-mediated efferocytosis. Interacts with EPHA2.

The protein resides in the cell membrane. The protein localises to the secreted. It localises to the extracellular exosome. Functionally, phosphatidylserine receptor that plays different role in immune response including phagocytosis of apoptotic cells and T-cell regulation. Controls T-cell activation in a bimodal fashion, decreasing the activation of naive T-cells by inducing cell cycle arrest, while increasing proliferation of activated T-cells by activating AKT1 and ERK1/2 phosphorylations and subsequent signaling pathways. Also plays a role in efferocytosis which is the process by which apoptotic cells are removed by phagocytic cells. Mechanistically, promotes the engulfment of apoptotic cells or exogenous particles by securing them to phagocytes through direct binding to phosphatidylserine present on apoptotic cells, while other engulfment receptors such as MERTK efficiently recognize apoptotic cells and mediate their ingestion. Additionally, promotes autophagy process by suppressing NLRP3 inflammasome activity via activation of LKB1/PRKAA1 pathway in a phosphatidylserine-dependent mechanism. Its function is as follows. (Microbial infection) Plays a positive role in exosome-mediated trafficking of HIV-1 virus and its entry into immune cells. The protein is T-cell immunoglobulin and mucin domain-containing protein 4 (TIMD4) of Homo sapiens (Human).